The sequence spans 315 residues: MAEQRLPVPRLRGVSREQFMEHLYPQRKPLVLEGLDLGSCTSKWTVDYLSQVGGTKEVKIHVAAVPQMDFISKNFVYRTLPFNKLVQRAAEETHKEFFISEDEKYYLRSLGEDPRKDVADIRQQFPSLGGDITFPMFFREEQFFSSVFRISSPGLQLWTHYDVMDNFLIQVTGKKRITLFNPRDAQYLYLSGSKSEVLNIDSPDLDKYPLFPKARRYECSLEAGDVLFIPALWFHNVVSEEFGVGVNIFWKHLPSECYDTTDTYGNKDPVAASRAVQILDRALKTLAELPEEYRDFYARQMVLRIQDKAYSKNFE.

The 166-residue stretch at 102–267 folds into the JmjC domain; it reads DEKYYLRSLG…YDTTDTYGNK (166 aa). Tyr106 contributes to the 2-oxoglutarate binding site. 2 residues coordinate Fe cation: His160 and Asp162. Residues Asn166 and Lys175 each coordinate 2-oxoglutarate. His235 is a Fe cation binding site.

The protein belongs to the TYW5 family. Homodimer. It depends on Fe(2+) as a cofactor.

The catalysed reaction is 7-[(3S)-3-amino-3-carboxypropyl]wyosine(37) in tRNA(Phe) + 2-oxoglutarate + O2 = 7-(2-hydroxy-3-amino-3-carboxypropyl)wyosine(37) in tRNA(Phe) + succinate + CO2. It participates in tRNA modification; wybutosine-tRNA(Phe) biosynthesis. Its function is as follows. tRNA hydroxylase that acts as a component of the wybutosine biosynthesis pathway. Wybutosine is a hyper modified guanosine with a tricyclic base found at the 3'-position adjacent to the anticodon of eukaryotic phenylalanine tRNA. Catalyzes the hydroxylation of 7-(a-amino-a-carboxypropyl)wyosine (yW-72) into undermodified hydroxywybutosine (OHyW*). OHyW* being further transformed into hydroxywybutosine (OHyW) by LCMT2/TYW4. OHyW is a derivative of wybutosine found in higher eukaryotes. In Mus musculus (Mouse), this protein is tRNA wybutosine-synthesizing protein 5 (Tyw5).